A 377-amino-acid polypeptide reads, in one-letter code: Palmitoyltransferase ZDHHC16 (377 aa).

Over 1–79 (MRGQWSLLLG…WLVDNVIRWC (79 aa)) the chain is Cytoplasmic. Residues 80–100 (GVVFVVLVIVLTSSIVAIAYL) form a helical membrane-spanning segment. Residues 101–116 (CVLPLILQTYSVPRLC) are Lumenal-facing. A helical transmembrane segment spans residues 117-137 (WHFFYSHWNLILIVFHYYQAI). Residues 138–198 (TTPPGYPPQG…NNCVGHYNHR (61 aa)) are Cytoplasmic-facing. The 51-residue stretch at 155 to 205 (SICKKCINPKPARTHHCSICNRCVLKMDHHCPWLNNCVGHYNHRYFFSFCF) folds into the DHHC domain. Residue Cys-185 is the S-palmitoyl cysteine intermediate of the active site. The chain crosses the membrane as a helical span at residues 199-219 (YFFSFCFFMTLGCVYCSYGSW). Residues 220-266 (DLFREAYAAIEKMKQLDKNKLQAVANQTYHQTPPPTFSFRERVTHKS) lie on the Lumenal side of the membrane. The chain crosses the membrane as a helical span at residues 267–287 (LVYLWFLCSSVALALGALTIW). Over 288-377 (HAVLISRGET…TAHSASVMAV (90 aa)) the chain is Cytoplasmic.

This sequence belongs to the DHHC palmitoyltransferase family. Interacts with ABL1. Interacts with COPS5/JAB1.

It localises to the endoplasmic reticulum membrane. The catalysed reaction is L-cysteinyl-[protein] + hexadecanoyl-CoA = S-hexadecanoyl-L-cysteinyl-[protein] + CoA. Palmitoyl acyltransferase that mediates palmitoylation of proteins such as PLN and ZDHHC6. Required during embryonic heart development and cardiac function, possibly by mediating palmitoylation of PLN, thereby affecting PLN phosphorylation and homooligomerization. Also required for eye development. Palmitoylates ZDHHC6, affecting the quaternary assembly of ZDHHC6, its localization, stability and function. May play a role in DNA damage response. May be involved in apoptosis regulation. Involved in the proliferation of neural stem cells by regulating the FGF/ERK pathway. In Bos taurus (Bovine), this protein is Palmitoyltransferase ZDHHC16.